A 438-amino-acid chain; its full sequence is Transposon Ty2-OR2 Gag polyprotein (438 aa).

Disordered stretches follow at residues 1–88 (MESQ…YQQH), 365–397 (NVSRTSPNTTNTKVTTRNYHRTNSSKPRAAKAH), and 419–438 (SSQYLSDDNELSLRPATERI). Polar residues-rich tracts occupy residues 19–39 (ASVTSKEVPSNQDPLAVSASN) and 49–60 (KVNSQEETTPGT). Residues 295–397 (ENNINVSDRL…SSKPRAAKAH (103 aa)) are RNA-binding. The segment covering 369-381 (TSPNTTNTKVTTR) has biased composition (low complexity).

In terms of assembly, homotrimer.

It is found in the cytoplasm. In terms of biological role, capsid protein (CA) is the structural component of the virus-like particle (VLP), forming the shell that encapsulates the retrotransposons dimeric RNA genome. The particles are assembled from trimer-clustered units and there are holes in the capsid shells that allow for the diffusion of macromolecules. CA also has nucleocapsid-like chaperone activity, promoting primer tRNA(i)-Met annealing to the multipartite primer-binding site (PBS), dimerization of Ty2 RNA and initiation of reverse transcription. The protein is Transposon Ty2-OR2 Gag polyprotein (TY2A-OR2) of Saccharomyces cerevisiae (strain ATCC 204508 / S288c) (Baker's yeast).